The chain runs to 920 residues: Puromycin-sensitive aminopeptidase (920 aa).

Substrate is bound by residues Glu181 and 317–321 (GAMEN). Zn(2+) is bound at residue His353. Catalysis depends on Glu354, which acts as the Proton acceptor. The Zn(2+) site is built by His357 and Glu376. 3'-nitrotyrosine is present on Tyr465. Positions 727-731 (RRRFK) match the Nuclear localization signal motif.

This sequence belongs to the peptidase M1 family. As to quaternary structure, monomer. Zn(2+) serves as cofactor. In terms of tissue distribution, widely expressed. Highest expression in brain, particularly the striatum and hippocampus. Expressed in Sertoli cells.

It is found in the cytoplasm. Its subcellular location is the cytosol. The protein resides in the nucleus. It carries out the reaction Release of an N-terminal amino acid, preferentially alanine, from a wide range of peptides, amides and arylamides.. Its activity is regulated as follows. Strongly inhibited by bestatin, leuhistin, actinonin, amastatin, 1,10-phenanthroline, DFP, PCMBS, Zn(2+), Cd(2+), Co(2+), Cu(2+), Hg(2+), EDTA and puromycin. Not inhibited by PMSF, and only slightly inhibited by leupeptin and aprotinin. Activity is increased by Mg(2+) and Ca(2+). Its function is as follows. Aminopeptidase with broad substrate specificity for several peptides. Involved in proteolytic events essential for cell growth and viability. May act as regulator of neuropeptide activity. Plays a role in the antigen-processing pathway for MHC class I molecules. Involved in the N-terminal trimming of cytotoxic T-cell epitope precursors. Digests the poly-Q peptides found in many cellular proteins. The protein is Puromycin-sensitive aminopeptidase (Npepps) of Mus musculus (Mouse).